Consider the following 228-residue polypeptide: Urease accessory protein UreE (228 aa).

The interval His193 to His228 is disordered. The span at Ser204–His228 shows a compositional bias: basic and acidic residues.

The protein belongs to the UreE family.

The protein localises to the cytoplasm. Involved in urease metallocenter assembly. Binds nickel. Probably functions as a nickel donor during metallocenter assembly. The polypeptide is Urease accessory protein UreE (Yersinia rohdei).